The following is a 191-amino-acid chain: Cell division protein SepF (191 aa).

The disordered stretch occupies residues 1-77 (MEGQDDYQLL…MGSNVIGLPG (77 aa)).

The protein belongs to the SepF family. Homodimer. Interacts with FtsZ.

The protein localises to the cytoplasm. Its function is as follows. Cell division protein that is part of the divisome complex and is recruited early to the Z-ring. Probably stimulates Z-ring formation, perhaps through the cross-linking of FtsZ protofilaments. Its function overlaps with FtsA. The polypeptide is Cell division protein SepF (Synechococcus sp. (strain JA-2-3B'a(2-13)) (Cyanobacteria bacterium Yellowstone B-Prime)).